The sequence spans 194 residues: Ribose 1,5-bisphosphate phosphokinase PhnN (194 aa).

24–31 provides a ligand contact to ATP; it reads GPSGAGKD.

This sequence belongs to the ribose 1,5-bisphosphokinase family.

It carries out the reaction alpha-D-ribose 1,5-bisphosphate + ATP = 5-phospho-alpha-D-ribose 1-diphosphate + ADP. The protein operates within metabolic intermediate biosynthesis; 5-phospho-alpha-D-ribose 1-diphosphate biosynthesis; 5-phospho-alpha-D-ribose 1-diphosphate from D-ribose 5-phosphate (route II): step 3/3. Catalyzes the phosphorylation of ribose 1,5-bisphosphate to 5-phospho-D-ribosyl alpha-1-diphosphate (PRPP). The sequence is that of Ribose 1,5-bisphosphate phosphokinase PhnN from Rhodopseudomonas palustris (strain ATCC BAA-98 / CGA009).